Reading from the N-terminus, the 424-residue chain is Protein pellino (424 aa).

Residues 1–21 (MVKRTDGTESPILAEDGGDGH) are disordered. S10 bears the Phosphoserine mark.

It belongs to the pellino family. As to quaternary structure, interacts with pll.

Its function is as follows. Scaffold protein involved in the Toll signaling pathway via its interaction with pelle/pll kinase. The protein is Protein pellino (Pli) of Drosophila melanogaster (Fruit fly).